A 754-amino-acid chain; its full sequence is Relaxin receptor 2 (754 aa).

Topologically, residues M1–N416 are extracellular. One can recognise an LDL-receptor class A domain in the interval S44–G81. Cystine bridges form between C45/C58, C52/C71, and C65/C80. N-linked (GlcNAc...) asparagine glycosylation occurs at N54. The N-linked (GlcNAc...) asparagine glycan is linked to N138. LRR repeat units lie at residues N138 to K159, K162 to G183, N186 to D207, Q210 to G231, S234 to Q255, Q258 to S279, S282 to S303, N306 to D327, L330 to S351, and Q354 to P375. A glycan (N-linked (GlcNAc...) asparagine) is linked at N274. N335 carries an N-linked (GlcNAc...) asparagine glycan. N378 carries N-linked (GlcNAc...) asparagine glycosylation. Residues I417–I437 traverse the membrane as a helical segment. At G438 to K455 the chain is on the cytoplasmic side. The helical transmembrane segment at I456–I476 threads the bilayer. At K477–C495 the chain is on the extracellular side. A disulfide bridge connects residues C495 and C573. Residues R496–L518 form a helical membrane-spanning segment. Residues E519–Q537 are Cytoplasmic-facing. Residues T538 to W558 traverse the membrane as a helical segment. Topologically, residues N559–G592 are extracellular. The chain crosses the membrane as a helical span at residues I593–F613. Residues C614–R639 lie on the Cytoplasmic side of the membrane. The chain crosses the membrane as a helical span at residues F640 to L660. Topologically, residues S661–T670 are extracellular. The helical transmembrane segment at M671–Y691 threads the bilayer. Residues T692 to S754 are Cytoplasmic-facing.

It belongs to the G-protein coupled receptor 1 family. As to expression, expressed mainly in the brain, kidney, muscle, testis, thyroid, uterus, peripheral blood cells and bone marrow.

The protein resides in the cell membrane. Receptor for relaxin. The activity of this receptor is mediated by G proteins leading to stimulation of adenylate cyclase and an increase of cAMP. May also be a receptor for Leydig insulin-like peptide (INSL3). This chain is Relaxin receptor 2 (RXFP2), found in Homo sapiens (Human).